The primary structure comprises 378 residues: Geraniol dehydrogenase (378 aa).

Residues C48, H75, C105, C108, C111, C119, and C179 each contribute to the Zn(2+) site.

This sequence belongs to the zinc-containing alcohol dehydrogenase family. Monomer. The cofactor is Zn(2+).

It carries out the reaction (2E)-geraniol + NAD(+) = (2E)-geranial + NADH + H(+). It catalyses the reaction (2E,6E)-farnesol + NAD(+) = (2E,6E)-farnesal + NADH + H(+). Catalyzes the NAD(+)-dependent oxidation of geraniol to geranial, playing an important role in the biosynthesis of neral, an alarm pheromone. Cannot use NADP(+). Also acts as a farnesol dehydrogenase by catalyzing the oxidation of (2E,6E)-farnesol to (2E,6E)-farnesal, with lower activity compared to geraniol dehydrogenase activity. This chain is Geraniol dehydrogenase, found in Carpoglyphus lactis (Dried fruit mite).